A 490-amino-acid chain; its full sequence is Protein twist (490 aa).

Disordered regions lie at residues 48 to 72 (QLQH…QHAQ), 96 to 165 (PSNE…TGGS), and 244 to 264 (QQQQ…HAQM). The segment covering 54-68 (QHLHSHQHHQQHHQQ) has biased composition (basic residues). Composition is skewed to low complexity over residues 102–134 (STSS…NPSG) and 244–263 (QQQQ…SHAQ). Residues Ser325 and Ser328 each carry the phosphoserine modification. Residues 330–361 (LDGSDAGGKAFRKPRRRLKRKPSKTEETDEFS) form a disordered region. Over residues 339 to 351 (AFRKPRRRLKRKP) the composition is skewed to basic residues. Positions 362–413 (NQRVMANVRERQRTQSLNDAFKSLQQIIPTLPSDKLSKIQTLKLATRYIDFL) constitute a bHLH domain.

In terms of assembly, efficient DNA binding requires dimerization with another bHLH protein. Homodimer. Interacts with akirin. As to expression, expressed in embryonic abdomen; a single cell ventrally, pairs of cells laterally and three cells dorsally in each hemisegment. In the thorax, there are patches of cells associated with the imaginal disks. During larval development, cells proliferate and, in the abdomen, they form ventral, lateral and dorsal clusters, which are the precursors of the adult abdominal muscles. In the thorax, they form populations of cells in the imaginal disks that correspond to the adepithelial cells.

It is found in the nucleus. Functionally, involved in the establishment and dorsoventral patterning of germ layers in the embryo. The chain is Protein twist (twi) from Drosophila melanogaster (Fruit fly).